The chain runs to 502 residues: ATP synthase subunit alpha (502 aa).

Residue 169-176 participates in ATP binding; the sequence is GDRQTGKT.

This sequence belongs to the ATPase alpha/beta chains family. As to quaternary structure, F-type ATPases have 2 components, CF(1) - the catalytic core - and CF(0) - the membrane proton channel. CF(1) has five subunits: alpha(3), beta(3), gamma(1), delta(1), epsilon(1). CF(0) has three main subunits: a(1), b(2) and c(9-12). The alpha and beta chains form an alternating ring which encloses part of the gamma chain. CF(1) is attached to CF(0) by a central stalk formed by the gamma and epsilon chains, while a peripheral stalk is formed by the delta and b chains.

Its subcellular location is the cell membrane. It carries out the reaction ATP + H2O + 4 H(+)(in) = ADP + phosphate + 5 H(+)(out). Its function is as follows. Produces ATP from ADP in the presence of a proton gradient across the membrane. The alpha chain is a regulatory subunit. This Desulfitobacterium hafniense (strain DSM 10664 / DCB-2) protein is ATP synthase subunit alpha.